We begin with the raw amino-acid sequence, 367 residues long: Anhydro-N-acetylmuramic acid kinase (367 aa).

Residue Gly13–Asp20 coordinates ATP.

The protein belongs to the anhydro-N-acetylmuramic acid kinase family.

The catalysed reaction is 1,6-anhydro-N-acetyl-beta-muramate + ATP + H2O = N-acetyl-D-muramate 6-phosphate + ADP + H(+). It participates in amino-sugar metabolism; 1,6-anhydro-N-acetylmuramate degradation. Its pathway is cell wall biogenesis; peptidoglycan recycling. Catalyzes the specific phosphorylation of 1,6-anhydro-N-acetylmuramic acid (anhMurNAc) with the simultaneous cleavage of the 1,6-anhydro ring, generating MurNAc-6-P. Is required for the utilization of anhMurNAc either imported from the medium or derived from its own cell wall murein, and thus plays a role in cell wall recycling. The protein is Anhydro-N-acetylmuramic acid kinase of Neisseria meningitidis serogroup B (strain ATCC BAA-335 / MC58).